The chain runs to 225 residues: Holliday junction branch migration complex subunit RuvA (225 aa).

The domain I stretch occupies residues 1–68; the sequence is MIGWLQGQKV…DDGSSLFGFP (68 aa). The interval 69–147 is domain II; that stretch reads ERRERDMFRT…EFSCRDPGMS (79 aa). A flexible linker region spans residues 148–158; that stretch reads LVDNGVIDSHQ. The tract at residues 159–225 is domain III; it reads LKDSSLHELQ…SLRWLSQEAA (67 aa).

Belongs to the RuvA family. In terms of assembly, homotetramer. Forms an RuvA(8)-RuvB(12)-Holliday junction (HJ) complex. HJ DNA is sandwiched between 2 RuvA tetramers; dsDNA enters through RuvA and exits via RuvB. An RuvB hexamer assembles on each DNA strand where it exits the tetramer. Each RuvB hexamer is contacted by two RuvA subunits (via domain III) on 2 adjacent RuvB subunits; this complex drives branch migration. In the full resolvosome a probable DNA-RuvA(4)-RuvB(12)-RuvC(2) complex forms which resolves the HJ.

It is found in the cytoplasm. In terms of biological role, the RuvA-RuvB-RuvC complex processes Holliday junction (HJ) DNA during genetic recombination and DNA repair, while the RuvA-RuvB complex plays an important role in the rescue of blocked DNA replication forks via replication fork reversal (RFR). RuvA specifically binds to HJ cruciform DNA, conferring on it an open structure. The RuvB hexamer acts as an ATP-dependent pump, pulling dsDNA into and through the RuvAB complex. HJ branch migration allows RuvC to scan DNA until it finds its consensus sequence, where it cleaves and resolves the cruciform DNA. The chain is Holliday junction branch migration complex subunit RuvA from Prochlorococcus marinus (strain MIT 9313).